The chain runs to 581 residues: Phosphoinositide phospholipase C 2 (581 aa).

An EF-hand-like domain is found at 26–102; sequence EIKTIFEKYS…NPPLALHKVH (77 aa). In terms of domain architecture, PI-PLC X-box spans 103-248; sequence HDMDAPISHY…LKRRIIISTK (146 aa). Residues histidine 118 and histidine 164 contribute to the active site. Residues 279 to 314 are disordered; it reads PSFIQRNKSEAKDDLDGNDDDDDDDDEDKSKINAPP. Over residues 294–305 the composition is skewed to acidic residues; that stretch reads DGNDDDDDDDDE. In terms of domain architecture, PI-PLC Y-box spans 317-433; sequence KHLIAIHAGK…GYIKKPDLLL (117 aa). The region spanning 434-563 is the C2 domain; sequence KSGSDSDIFD…EGIRAFPLHS (130 aa).

The cofactor is Ca(2+). Phosphorylation level varies significantly during early response to bacterial elicitor. Expressed in roots, shoots, leaves and flowers.

It is found in the cell membrane. It catalyses the reaction a 1,2-diacyl-sn-glycero-3-phospho-(1D-myo-inositol-4,5-bisphosphate) + H2O = 1D-myo-inositol 1,4,5-trisphosphate + a 1,2-diacyl-sn-glycerol + H(+). Functionally, the production of the second messenger molecules diacylglycerol (DAG) and inositol 1,4,5-trisphosphate (IP3) is mediated by activated phosphatidylinositol-specific phospholipase C enzymes. At physiological calcium concentration, the preferred substrate is phosphatidylinositol 4,5-bisphosphate versus phosphatidylinositol. The polypeptide is Phosphoinositide phospholipase C 2 (PLC2) (Arabidopsis thaliana (Mouse-ear cress)).